The primary structure comprises 36 residues: Photosystem I reaction center subunit VIII (36 aa).

The chain crosses the membrane as a helical span at residues 8–28 (SVLVPLVGLVFPAIAMASLFL).

It belongs to the PsaI family.

It localises to the plastid. Its subcellular location is the chloroplast thylakoid membrane. May help in the organization of the PsaL subunit. The polypeptide is Photosystem I reaction center subunit VIII (Helianthus annuus (Common sunflower)).